The chain runs to 213 residues: Golgi to ER traffic protein 1 (213 aa).

Residues 1–4 (MESW) are Lumenal-facing. A helical transmembrane segment spans residues 5-25 (LLVILAFLVLERLWPLIDSLI). The Cytoplasmic segment spans residues 26 to 98 (QRFAQANSTK…RTKASLKKVK (73 aa)). Residues 55–99 (AQDQYVKWTKNNRTLEKINKQIEEEKKQLLSQVDRTKASLKKVKL) adopt a coiled-coil conformation. The helical transmembrane segment at 99-119 (LVLITVPFTILKFYKGKMPIY) threads the bilayer. The Lumenal portion of the chain corresponds to 120–158 (DLPKGLFPNYLQGLFQHGWVYLALGPLNIKKVGDGTHVT). Residues 159 to 175 (VSLAIWLFALLKVVSTL) traverse the membrane as a helical segment. Residues 176–213 (GNIWESLTAPAIPAPTITTDPIDQTNESEKPPVDQPVD) lie on the Cytoplasmic side of the membrane. The disordered stretch occupies residues 193–213 (TTDPIDQTNESEKPPVDQPVD).

This sequence belongs to the WRB/GET1 family. As to quaternary structure, component of the Golgi to ER traffic (GET) complex, which is composed of GET1, GET2 and GET3. Within the complex, GET1 and GET2 form a heterotetramer which is stabilized by phosphatidylinositol binding and which binds to the GET3 homodimer.

The protein localises to the endoplasmic reticulum membrane. The protein resides in the golgi apparatus membrane. In terms of biological role, required for the post-translational delivery of tail-anchored (TA) proteins to the endoplasmic reticulum. Together with GET2, acts as a membrane receptor for soluble GET3, which recognizes and selectively binds the transmembrane domain of TA proteins in the cytosol. The GET complex cooperates with the HDEL receptor ERD2 to mediate the ATP-dependent retrieval of resident ER proteins that contain a C-terminal H-D-E-L retention signal from the Golgi to the ER. The protein is Golgi to ER traffic protein 1 of Kluyveromyces lactis (strain ATCC 8585 / CBS 2359 / DSM 70799 / NBRC 1267 / NRRL Y-1140 / WM37) (Yeast).